The chain runs to 215 residues: Ribonuclease T (215 aa).

Residues 20 to 194 (VVIDVETAGF…YDTERTAVLF (175 aa)) form the Exonuclease domain. Mg(2+) contacts are provided by aspartate 23, glutamate 25, histidine 181, and aspartate 186. Histidine 181 functions as the Proton donor/acceptor in the catalytic mechanism.

It belongs to the RNase T family. In terms of assembly, homodimer. Requires Mg(2+) as cofactor.

In terms of biological role, trims short 3' overhangs of a variety of RNA species, leaving a one or two nucleotide 3' overhang. Responsible for the end-turnover of tRNA: specifically removes the terminal AMP residue from uncharged tRNA (tRNA-C-C-A). Also appears to be involved in tRNA biosynthesis, especially in strains lacking other exoribonucleases. Its function is as follows. A general regulator of small RNAs (sRNA), contributes to their degradation. Upon overexpression suppresses sRNA-mediated RhyB-silencing of multiple RNA targets; overexpression leads to nearly complete loss of RhyB sRNA. In Escherichia coli (strain K12), this protein is Ribonuclease T.